The following is a 1345-amino-acid chain: DNA-directed RNA polymerase subunit beta (1345 aa).

Belongs to the RNA polymerase beta chain family. The RNAP catalytic core consists of 2 alpha, 1 beta, 1 beta' and 1 omega subunit. When a sigma factor is associated with the core the holoenzyme is formed, which can initiate transcription.

It catalyses the reaction RNA(n) + a ribonucleoside 5'-triphosphate = RNA(n+1) + diphosphate. In terms of biological role, DNA-dependent RNA polymerase catalyzes the transcription of DNA into RNA using the four ribonucleoside triphosphates as substrates. This chain is DNA-directed RNA polymerase subunit beta, found in Shewanella sp. (strain ANA-3).